The chain runs to 213 residues: High frequency lysogenization protein HflD homolog (213 aa).

Residues 79–126 adopt a coiled-coil conformation; the sequence is QGLNAELTRYTLSLMVLERKLSSAKGALDTLGNRINGLQRQLEHFDLQ.

It belongs to the HflD family.

Its subcellular location is the cytoplasm. It localises to the cell inner membrane. The sequence is that of High frequency lysogenization protein HflD homolog from Shigella flexneri serotype 5b (strain 8401).